A 699-amino-acid polypeptide reads, in one-letter code: Elongation factor G (699 aa).

The tr-type G domain occupies 8 to 283 (EHIRNIGICA…AVVDFLPSPI (276 aa)). GTP-binding positions include 17 to 24 (AHIDAGKT), 81 to 85 (DTPGH), and 135 to 138 (NKMD).

It belongs to the TRAFAC class translation factor GTPase superfamily. Classic translation factor GTPase family. EF-G/EF-2 subfamily.

The protein resides in the cytoplasm. Functionally, catalyzes the GTP-dependent ribosomal translocation step during translation elongation. During this step, the ribosome changes from the pre-translocational (PRE) to the post-translocational (POST) state as the newly formed A-site-bound peptidyl-tRNA and P-site-bound deacylated tRNA move to the P and E sites, respectively. Catalyzes the coordinated movement of the two tRNA molecules, the mRNA and conformational changes in the ribosome. This chain is Elongation factor G, found in Rickettsia rickettsii.